The primary structure comprises 221 residues: UPF0502 protein Sputcn32_1644 (221 aa).

It belongs to the UPF0502 family.

In Shewanella putrefaciens (strain CN-32 / ATCC BAA-453), this protein is UPF0502 protein Sputcn32_1644.